The primary structure comprises 494 residues: Cobyric acid synthase (494 aa).

Residues 252–444 (DLNIAVIRLP…LHGLFDNGPW (193 aa)) enclose the GATase cobBQ-type domain. Cys-333 (nucleophile) is an active-site residue. His-436 is an active-site residue.

It belongs to the CobB/CobQ family. CobQ subfamily.

Its pathway is cofactor biosynthesis; adenosylcobalamin biosynthesis. In terms of biological role, catalyzes amidations at positions B, D, E, and G on adenosylcobyrinic A,C-diamide. NH(2) groups are provided by glutamine, and one molecule of ATP is hydrogenolyzed for each amidation. In Nostoc punctiforme (strain ATCC 29133 / PCC 73102), this protein is Cobyric acid synthase.